The primary structure comprises 226 residues: Lysoplasmalogenase TMEM86B (226 aa).

At 1–23 (MDAGKAGQTLKTHCSAQRPDVCR) the chain is on the cytoplasmic side. A helical membrane pass occupies residues 24 to 40 (WLSPFILSCCVYFCLWI). The Extracellular portion of the chain corresponds to 41–46 (PEDQLS). A helical membrane pass occupies residues 47 to 67 (WFAALVKCLPVLCLAGFLWVM). At 68-75 (SPSGGYTQ) the chain is on the cytoplasmic side. Residues 76-93 (LLQGALVCSAVGDACLIW) form a helical membrane-spanning segment. Over 94-100 (PAAFVPG) the chain is Extracellular. The chain crosses the membrane as a helical span at residues 101–117 (MAAFATAHLLYVWAFGF). The Cytoplasmic segment spans residues 118–123 (SPLQPG). Residues 124-140 (LLLLIILAPGPYLSLVL) form a helical membrane-spanning segment. Over 141 to 146 (QHLEPD) the chain is Extracellular. A helical transmembrane segment spans residues 147–163 (MVLPVAAYGLILMAMLW). The Cytoplasmic portion of the chain corresponds to 164–171 (RGLAQGGS). A helical membrane pass occupies residues 172-188 (AGWGALLFTLSDGVLAW). Residues 189-199 (DTFAQPLPHAH) are Extracellular-facing. Residues 200–218 (LVIMTTYYAAQLLITLSAL) traverse the membrane as a helical segment. Residues 219 to 226 (RSPVPKTD) are Cytoplasmic-facing.

Belongs to the TMEM86 family. As to quaternary structure, homodimer.

Its subcellular location is the endoplasmic reticulum membrane. The protein resides in the cytoplasm. It catalyses the reaction a 1-O-(1Z-alkenyl)-sn-glycero-3-phosphocholine + H2O = a 2,3-saturated aldehyde + sn-glycerol 3-phosphocholine. The catalysed reaction is a 1-O-(1Z-alkenyl)-sn-glycero-3-phosphoethanolamine + H2O = a 2,3-saturated aldehyde + sn-glycero-3-phosphoethanolamine. Its activity is regulated as follows. Competitively inhibited by lysophosphatidic acid. Functionally, catalyzes the hydrolysis of the vinyl ether bond of choline or ethanolamine lysoplasmalogens, forming fatty aldehyde and glycerophosphocholine or glycerophosphoethanolamine, respectively and is specific for the sn-2-deacylated (lyso) form of plasmalogen. The sequence is that of Lysoplasmalogenase TMEM86B (TMEM86B) from Homo sapiens (Human).